Consider the following 365-residue polypeptide: UDP-galactose transporter homolog 1 (365 aa).

2 helical membrane passes run 42-62 (IIDL…WAVL) and 80-100 (ASLV…YAYL). N-linked (GlcNAc...) asparagine glycosylation is present at asparagine 115. A run of 2 helical transmembrane segments spans residues 182–202 (YAVV…HAAP) and 206–226 (SGAG…SMLL). An N-linked (GlcNAc...) asparagine glycan is attached at asparagine 231. A run of 4 helical transmembrane segments spans residues 249–269 (VMCG…LTFS), 289–309 (DIVL…QTLE), 315–335 (VLVT…VVWF), and 339–359 (LTLG…FEAW).

It belongs to the nucleotide-sugar transporter family. SLC35B subfamily.

The protein localises to the endoplasmic reticulum membrane. Functionally, may be involved in specific transport of UDP-Gal from the cytosol to the Golgi lumen. Involved in the maintenance of optimal conditions for the folding of secretory pathway proteins in the endoplasmic reticulum. The polypeptide is UDP-galactose transporter homolog 1 (HUT1) (Yarrowia lipolytica (strain CLIB 122 / E 150) (Yeast)).